The following is a 376-amino-acid chain: Putative phosphoserine aminotransferase (376 aa).

The disordered stretch occupies residues 1–30 (MADQLTPSLDIPAALKPRDGRFGSGPSKVR). Arg50 provides a ligand contact to L-glutamate. Pyridoxal 5'-phosphate contacts are provided by residues 84–85 (AT), Phe108, Thr154, Asp176, and Gln199. An N6-(pyridoxal phosphate)lysine modification is found at Lys200. 251–252 (NT) is a pyridoxal 5'-phosphate binding site.

This sequence belongs to the class-V pyridoxal-phosphate-dependent aminotransferase family. SerC subfamily. Homodimer. Requires pyridoxal 5'-phosphate as cofactor.

The protein localises to the cytoplasm. The enzyme catalyses O-phospho-L-serine + 2-oxoglutarate = 3-phosphooxypyruvate + L-glutamate. It carries out the reaction 4-(phosphooxy)-L-threonine + 2-oxoglutarate = (R)-3-hydroxy-2-oxo-4-phosphooxybutanoate + L-glutamate. Its pathway is amino-acid biosynthesis; L-serine biosynthesis; L-serine from 3-phospho-D-glycerate: step 2/3. The protein operates within cofactor biosynthesis; pyridoxine 5'-phosphate biosynthesis; pyridoxine 5'-phosphate from D-erythrose 4-phosphate: step 3/5. Functionally, catalyzes the reversible conversion of 3-phosphohydroxypyruvate to phosphoserine and of 3-hydroxy-2-oxo-4-phosphonooxybutanoate to phosphohydroxythreonine. The chain is Putative phosphoserine aminotransferase from Mycobacterium leprae (strain TN).